We begin with the raw amino-acid sequence, 259 residues long: Kallikrein 1-related peptidase b22 (259 aa).

The N-terminal stretch at 1–17 is a signal peptide; sequence MRFLILFLTLSLGGIDA. The propeptide at 18–24 is activation peptide; sequence APPVQSR. The Peptidase S1 domain maps to 25–256; that stretch reads ILGGFKCEKN…FTSWIKDTMA (232 aa). 5 disulfides stabilise this stretch: cysteine 31–cysteine 171, cysteine 50–cysteine 66, cysteine 150–cysteine 217, cysteine 182–cysteine 196, and cysteine 207–cysteine 232. Histidine 65 serves as the catalytic Charge relay system. The N-linked (GlcNAc...) asparagine glycan is linked to asparagine 102. Catalysis depends on aspartate 118, which acts as the Charge relay system. Serine 211 serves as the catalytic Charge relay system.

It belongs to the peptidase S1 family. Kallikrein subfamily.

It carries out the reaction Preferential cleavage of Arg-|-Xaa bonds in small molecule substrates. Highly selective action to release kallidin (lysyl-bradykinin) from kininogen involves hydrolysis of Met-|-Xaa or Leu-|-Xaa.. Glandular kallikreins cleave Met-Lys and Arg-Ser bonds in kininogen to release Lys-bradykinin. This chain is Kallikrein 1-related peptidase b22 (Klk1b22), found in Mus musculus (Mouse).